Consider the following 364-residue polypeptide: MTQRWGPQRLAGGQPHAGLEDSTRASIFTYTNSNATRGPFEGPNYHIAPRWVYHVTSAWMIFVVIASVFTNGLVLAATMKFKKLRHPLNWILVNLAVADLAETIIASTISVVNQIYGYFVLGHPMCVLEGYTVSLCGITGLWSLAIISWERWLVVCKPFGNVRFDAKLAIAGIAFSWIWAAVWTAPPIFGWSRYWPHGLKTSCGPDVFSGSSYPGVQSYMIVLMITCCIIPLSVIVLCYLQVWLAIRAVAKQQKESESTQKAEKEVTRMVMVMIFAYCVCWGPYTFFACFAAAHPGYAFHPLVAALPAYFAKSATIYNPIIYVFMNRQFRNCIMQLFGKKVDDGSELSSASRTEASSVSSVSPA.

The Extracellular segment spans residues 1–52 (MTQRWGPQRLAGGQPHAGLEDSTRASIFTYTNSNATRGPFEGPNYHIAPRWV). S22 carries an O-linked (GlcNAc) serine glycan. A glycan (N-linked (GlcNAc...) asparagine) is linked at N34. Residues 53-77 (YHVTSAWMIFVVIASVFTNGLVLAA) traverse the membrane as a helical segment. The Cytoplasmic segment spans residues 78 to 89 (TMKFKKLRHPLN). A helical membrane pass occupies residues 90 to 115 (WILVNLAVADLAETIIASTISVVNQI). The Extracellular segment spans residues 116-129 (YGYFVLGHPMCVLE). C126 and C203 are joined by a disulfide. The helical transmembrane segment at 130-149 (GYTVSLCGITGLWSLAIISW) threads the bilayer. Residues 150–168 (ERWLVVCKPFGNVRFDAKL) are Cytoplasmic-facing. Residues 169–192 (AIAGIAFSWIWAAVWTAPPIFGWS) traverse the membrane as a helical segment. Over 193–218 (RYWPHGLKTSCGPDVFSGSSYPGVQS) the chain is Extracellular. The helical transmembrane segment at 219–246 (YMIVLMITCCIIPLSVIVLCYLQVWLAI) threads the bilayer. Topologically, residues 247-268 (RAVAKQQKESESTQKAEKEVTR) are cytoplasmic. A helical membrane pass occupies residues 269–292 (MVMVMIFAYCVCWGPYTFFACFAA). Topologically, residues 293–300 (AHPGYAFH) are extracellular. Residues 301-325 (PLVAALPAYFAKSATIYNPIIYVFM) traverse the membrane as a helical segment. K312 carries the post-translational modification N6-(retinylidene)lysine. The Cytoplasmic portion of the chain corresponds to 326 to 364 (NRQFRNCIMQLFGKKVDDGSELSSASRTEASSVSSVSPA).

This sequence belongs to the G-protein coupled receptor 1 family. Opsin subfamily. Post-translationally, phosphorylated on some or all of the serine and threonine residues present in the C-terminal region. As to expression, the three color pigments are found in the cone photoreceptor cells. Expressed in retina.

The protein localises to the membrane. In terms of biological role, visual pigments are the light-absorbing molecules that mediate vision. They consist of an apoprotein, opsin, covalently linked to cis-retinal. This Felis catus (Cat) protein is Long-wave-sensitive opsin 1 (OPN1LW).